The sequence spans 99 residues: Plastocyanin A'/A'' (99 aa).

Residues Ile-1–Asn-99 enclose the Plastocyanin-like domain. The Cu cation site is built by His-37, Cys-84, His-87, and Met-92.

The protein belongs to the plastocyanin family. Cu(2+) is required as a cofactor.

It localises to the plastid. The protein resides in the chloroplast thylakoid membrane. Participates in electron transfer between P700 and the cytochrome b6-f complex in photosystem I. The sequence is that of Plastocyanin A'/A'' from Nicotiana tabacum (Common tobacco).